The chain runs to 199 residues: Adenylyl-sulfate kinase (199 aa).

An ATP-binding site is contributed by G35–S42. The active-site Phosphoserine intermediate is S109.

Belongs to the APS kinase family.

The catalysed reaction is adenosine 5'-phosphosulfate + ATP = 3'-phosphoadenylyl sulfate + ADP + H(+). The protein operates within sulfur metabolism; hydrogen sulfide biosynthesis; sulfite from sulfate: step 2/3. Its function is as follows. Catalyzes the synthesis of activated sulfate. This Clostridium kluyveri (strain ATCC 8527 / DSM 555 / NBRC 12016 / NCIMB 10680 / K1) protein is Adenylyl-sulfate kinase.